We begin with the raw amino-acid sequence, 2883 residues long: Desmoplakin (2883 aa).

The tract at residues 1-21 (MSCNGGSHPRINTLGRMTRAE) is disordered. Positions 1 to 596 (MSCNGGSHPR…DYMKTIEDLE (596 aa)) are interaction with PKP1, JUP, PKP2. A globular 1 region spans residues 1 to 1068 (MSCNGGSHPR…ANSENCNKNK (1068 aa)). At S22 the chain carries Phosphoserine. A Phosphothreonine modification is found at T59. At S65 the chain carries Phosphoserine. Y68 is modified (phosphotyrosine). Phosphothreonine is present on T73. Phosphoserine is present on residues S177, S178, and S188. Spectrin repeat units lie at residues 190-283 (SGWD…HLRQ) and 284-387 (LQNI…LKEN). The Spectrin 3a repeat unit spans residues 388 to 458 (AAYFQFFEEA…NLVNKSKKIV (71 aa)). Residues 470–527 (NKPIILRALCDYKQDQKIVHKGDECILKDNNERSKWYVTGPGGVDMLVPSVGLIIPPP) form the SH3 domain. The Spectrin 3b repeat unit spans residues 528–557 (NPLAVDLSCKIEQYYEAILALWNQLYINMK). Spectrin repeat units follow at residues 558-639 (SLVS…IQLP), 666-781 (VIET…SLCS), and 782-895 (VRAL…DLEK). The stretch at 1034–1956 (KSLEDLKLKN…LQKEIEKLRQ (923 aa)) forms a coiled coil. Residues 1069-1957 (FLDQNLQKYQ…QKEIEKLRQR (889 aa)) are central fibrous rod domain. A phosphoserine mark is found at S1670, S1720, and S2036. The tract at residues 1958–2882 (PYGSHRETQT…YSFSSSSIGG (925 aa)) is globular 2. The tract at residues 1972 to 2220 (TVDSSKLVFD…LLLSVQKRSM (249 aa)) is 4.5 X 38 AA tandem repeats (Domain A). Plectin repeat units follow at residues 2021-2057 (QPFL…PEST), 2058-2095 (VMLL…FDDR), 2096-2133 (QQIY…RETG), 2134-2171 (MRLL…RDLY), 2175-2209 (NDPR…PHTG), 2210-2245 (LLLL…PSTV), 2263-2300 (KDFL…PGTA), 2301-2338 (LELL…IEFK), 2339-2376 (EKLL…KGHG), 2377-2414 (IRLL…EELS), 2418-2452 (SDPS…EETG), 2468-2505 (SQKN…YDTF), 2519-2556 (TITG…RKFF), 2622-2659 (SDPL…SITG), 2660-2697 (QRLL…QDMA), 2736-2773 (QRFL…GRAA), and 2774-2811 (QRLQ…DITG). Residues S2219, S2221, and S2237 each carry the phosphoserine modification. Residues 2256–2458 (DEVGERIKDF…EETGLCLLPL (203 aa)) form a 4.5 X 38 AA tandem repeats (Domain B) region. Q2492 is lipidated: Omega-hydroxyceramide glutamate ester. Positions 2621 to 2833 (LSDPLEESSP…GLPSPYNMSA (213 aa)) are 4.5 X 38 AA tandem repeats (Domain C). 2 positions are modified to phosphoserine: S2822 and S2827. Residues 2822–2883 (SKGLPSPYNM…SFSSSSIGGY (62 aa)) are disordered. A Phosphotyrosine modification is found at Y2829. Phosphoserine occurs at positions 2832 and 2836. Residues 2835–2858 (GSRSGSRSGSRSGSRSGSRSGSRR) are 6 X 4 AA tandem repeats of G-S-R-[SR]. Positions 2835 to 2858 (GSRSGSRSGSRSGSRSGSRSGSRR) are enriched in low complexity. Omega-N-methylarginine occurs at positions 2837 and 2858. S2860 is subject to Phosphoserine. Position 2864 is a phosphothreonine (T2864). Residues 2867-2883 (SSYSYSYSFSSSSIGGY) show a composition bias toward low complexity. The residue at position 2879 (S2879) is a Phosphoserine.

It belongs to the plakin or cytolinker family. As to quaternary structure, homodimer. Interacts with COL17A1 (via cytoplasmic region). Interacts with DSC2. Interacts with PKP1. Interacts with PKP2. Interacts weakly with TMEM65. In terms of processing, phosphorylation at Ser-2860 increases association with intermediate filament cytokeratin, potentially facilitating interaction between desmosome junctions and intermediate filament architecture. In terms of tissue distribution, expressed in undifferentiated keratinocytes of the epidermis at birth, expression increases as differentiation proceeds (at protein level). Abundantly expressed in the suprabasal layers and weakly in the basal layers of the outer hair root sheath (at protein level). Expressed at intercalated disks in cardiomyocytes (at protein level).

It is found in the cell junction. The protein localises to the desmosome. It localises to the cell membrane. The protein resides in the cytoplasm. In terms of biological role, major high molecular weight protein of desmosomes. Regulates profibrotic gene expression in cardiomyocytes via activation of the MAPK14/p38 MAPK signaling cascade and increase in TGFB1 protein abundance. This chain is Desmoplakin, found in Mus musculus (Mouse).